The chain runs to 367 residues: MQRDQVIVVKLGTSVLTGGTDKLDKAHMVELVRQCCELKKQGHHVILVSSGAVAAGREQLLKPCGRSVIDKQMLAAVGQGQLIHIWQSLFALYGVNVGQMLLTRADVNDRERYLNARDTLNALLNYDVVPIINENDAVATSEIKVGDNDNLSALVAILANANKLLLLTDQEGLFTSDPRTNADATLIGEVSDINDELRQLAGGSGTNLGTGGMATKLQAADIARRAGVEVIIAKGAGKNVILKCMSEQLPGTRFLKLTAPKEGRKKWLLAGPKSSGQIVIDAGAITALQTKGASLLAKGVTNALGAFERGDLISVINSDKQLIARGLTRFSSSEVNKIKGAHSKQIGELLDYDGGAEVLHRDDLILL.

Lys-10 is a binding site for ATP. Substrate-binding residues include Ser-50, Asp-136, and Asn-148. ATP contacts are provided by residues 168-169 (TD) and 210-216 (TGGMATK). A PUA domain is found at 275–353 (SGQIVIDAGA…KQIGELLDYD (79 aa)).

Belongs to the glutamate 5-kinase family.

It localises to the cytoplasm. The enzyme catalyses L-glutamate + ATP = L-glutamyl 5-phosphate + ADP. It functions in the pathway amino-acid biosynthesis; L-proline biosynthesis; L-glutamate 5-semialdehyde from L-glutamate: step 1/2. In terms of biological role, catalyzes the transfer of a phosphate group to glutamate to form L-glutamate 5-phosphate. This chain is Glutamate 5-kinase 2, found in Pseudoalteromonas translucida (strain TAC 125).